A 349-amino-acid polypeptide reads, in one-letter code: Phosphoribosylformylglycinamidine cyclo-ligase (349 aa).

The protein belongs to the AIR synthase family.

Its subcellular location is the cytoplasm. The enzyme catalyses 2-formamido-N(1)-(5-O-phospho-beta-D-ribosyl)acetamidine + ATP = 5-amino-1-(5-phospho-beta-D-ribosyl)imidazole + ADP + phosphate + H(+). It functions in the pathway purine metabolism; IMP biosynthesis via de novo pathway; 5-amino-1-(5-phospho-D-ribosyl)imidazole from N(2)-formyl-N(1)-(5-phospho-D-ribosyl)glycinamide: step 2/2. This is Phosphoribosylformylglycinamidine cyclo-ligase from Lactobacillus delbrueckii subsp. bulgaricus (strain ATCC 11842 / DSM 20081 / BCRC 10696 / JCM 1002 / NBRC 13953 / NCIMB 11778 / NCTC 12712 / WDCM 00102 / Lb 14).